The primary structure comprises 71 residues: UPF0346 protein BCE_2336 (71 aa).

This sequence belongs to the UPF0346 family.

The protein is UPF0346 protein BCE_2336 of Bacillus cereus (strain ATCC 10987 / NRS 248).